A 230-amino-acid polypeptide reads, in one-letter code: RNA polymerase sigma factor FliA (230 aa).

The tract at residues 6–78 (LWQRYVPLVR…MLDELRSRDW (73 aa)) is sigma-70 factor domain-2. The short motif at 33–36 (DLLQ) is the Interaction with polymerase core subunit RpoC element. Positions 86–156 (NAREVASAMQ…VEPMLEGHED (71 aa)) are sigma-70 factor domain-3. The sigma-70 factor domain-4 stretch occupies residues 175-223 (AIEALPEREKMVLTLYYQEELNLKEIGAVLEVGESRVSQLHSQAIKRLR). Residues 197 to 216 (LKEIGAVLEVGESRVSQLHS) constitute a DNA-binding region (H-T-H motif).

The protein belongs to the sigma-70 factor family. FliA subfamily.

It localises to the cytoplasm. Sigma factors are initiation factors that promote the attachment of RNA polymerase to specific initiation sites and are then released. This sigma factor controls the expression of flagella-related genes. The chain is RNA polymerase sigma factor FliA from Yersinia enterocolitica.